The primary structure comprises 142 residues: uncharacterized protein (142 aa).

Transmembrane regions (helical) follow at residues 12 to 29 (NAIL…YGLL) and 44 to 66 (IYGQ…GVTA).

The protein localises to the cell membrane. This is an uncharacterized protein from Archaeoglobus fulgidus (strain ATCC 49558 / DSM 4304 / JCM 9628 / NBRC 100126 / VC-16).